A 155-amino-acid polypeptide reads, in one-letter code: Large ribosomal subunit protein eL24B (155 aa).

A Phosphoserine modification is found at S7. The disordered stretch occupies residues 66 to 155; it reads EVAKKRSRKT…AFQKVAATSR (90 aa). Residues 89–129 are compositionally biased toward basic and acidic residues; it reads LIKERRSLKPEVRKANREEKLKANKEKKRAEKAARKAEKAK.

This sequence belongs to the eukaryotic ribosomal protein eL24 family. Component of the large ribosomal subunit (LSU). Mature yeast ribosomes consist of a small (40S) and a large (60S) subunit. The 40S small subunit contains 1 molecule of ribosomal RNA (18S rRNA) and 33 different proteins (encoded by 57 genes). The large 60S subunit contains 3 rRNA molecules (25S, 5.8S and 5S rRNA) and 46 different proteins (encoded by 81 genes).

It localises to the cytoplasm. Functionally, component of the ribosome, a large ribonucleoprotein complex responsible for the synthesis of proteins in the cell. The small ribosomal subunit (SSU) binds messenger RNAs (mRNAs) and translates the encoded message by selecting cognate aminoacyl-transfer RNA (tRNA) molecules. The large subunit (LSU) contains the ribosomal catalytic site termed the peptidyl transferase center (PTC), which catalyzes the formation of peptide bonds, thereby polymerizing the amino acids delivered by tRNAs into a polypeptide chain. The nascent polypeptides leave the ribosome through a tunnel in the LSU and interact with protein factors that function in enzymatic processing, targeting, and the membrane insertion of nascent chains at the exit of the ribosomal tunnel. This chain is Large ribosomal subunit protein eL24B, found in Saccharomyces cerevisiae (strain ATCC 204508 / S288c) (Baker's yeast).